The sequence spans 88 residues: uncharacterized protein (88 aa).

The first 23 residues, 1–23, serve as a signal peptide directing secretion; that stretch reads MAVSGLRLTIVWGLLVLILTCQA. The segment covering 25–40 has biased composition (basic and acidic residues); sequence DKPEGKPDEQPHDSGK. The tract at residues 25–45 is disordered; the sequence is DKPEGKPDEQPHDSGKNSEPA.

The protein localises to the secreted. This is an uncharacterized protein from Bos taurus (Bovine).